The primary structure comprises 475 residues: D-lactate dehydrogenase (475 aa).

Residues tyrosine 43–alanine 222 enclose the FAD-binding PCMH-type domain.

Belongs to the FAD-binding oxidoreductase/transferase type 4 family. FAD serves as cofactor. Requires Zn(2+) as cofactor.

The catalysed reaction is (R)-lactate + A = pyruvate + AH2. Catalyzes the dehydrogenation of (R)-lactate (D-lactate) to pyruvate. Active in vitro with the artificial electron acceptor 2,6-dichlorophenolindophenol (DCPIP), but not with NAD, NADP, or cytochrome c. Also displays a very low oxidase activity in vitro on D-lactate and L-lactate with O2 as the electron acceptor, but this activity is most likely not physiological. In Anaerostipes hadrus, this protein is D-lactate dehydrogenase.